The following is an 88-amino-acid chain: Small ribosomal subunit protein bS20 (88 aa).

Over residues 1 to 23 (MPNTKSAEKALRVADANRQENRR) the composition is skewed to basic and acidic residues. The disordered stretch occupies residues 1 to 29 (MPNTKSAEKALRVADANRQENRRAKSQVK).

It belongs to the bacterial ribosomal protein bS20 family.

Binds directly to 16S ribosomal RNA. The chain is Small ribosomal subunit protein bS20 from Dehalococcoides mccartyi (strain ATCC BAA-2100 / JCM 16839 / KCTC 5957 / BAV1).